The primary structure comprises 463 residues: Argininosuccinate lyase (463 aa).

It belongs to the lyase 1 family. Argininosuccinate lyase subfamily.

It localises to the cytoplasm. The enzyme catalyses 2-(N(omega)-L-arginino)succinate = fumarate + L-arginine. The protein operates within amino-acid biosynthesis; L-arginine biosynthesis; L-arginine from L-ornithine and carbamoyl phosphate: step 3/3. This is Argininosuccinate lyase from Bradyrhizobium sp. (strain BTAi1 / ATCC BAA-1182).